The following is a 358-amino-acid chain: Aromatic amino acid aminotransferase (358 aa).

Lysine 222 is subject to N6-(pyridoxal phosphate)lysine.

Belongs to the class-II pyridoxal-phosphate-dependent aminotransferase family. In terms of assembly, homodimer. Requires pyridoxal 5'-phosphate as cofactor.

The catalysed reaction is an aromatic L-alpha-amino acid + 2-oxoglutarate = an aromatic oxo-acid + L-glutamate. In terms of biological role, aminotransferase that catalyzes the conversion of aromatic amino acids and 2-oxoglutarate into corresponding aromatic oxo acids and L-glutamate. The chain is Aromatic amino acid aminotransferase from Mycobacterium sp. (strain KMS).